Here is a 381-residue protein sequence, read N- to C-terminus: 1-deoxy-D-xylulose 5-phosphate reductoisomerase (381 aa).

Positions 10, 11, 12, 13, 36, 37, 38, and 122 each coordinate NADPH. Residue lysine 123 coordinates 1-deoxy-D-xylulose 5-phosphate. An NADPH-binding site is contributed by glutamate 124. Aspartate 148 provides a ligand contact to Mn(2+). The 1-deoxy-D-xylulose 5-phosphate site is built by serine 149, glutamate 150, serine 173, and histidine 196. Glutamate 150 lines the Mn(2+) pocket. Glycine 202 serves as a coordination point for NADPH. 4 residues coordinate 1-deoxy-D-xylulose 5-phosphate: serine 209, asparagine 214, lysine 215, and glutamate 218. Glutamate 218 lines the Mn(2+) pocket.

It belongs to the DXR family. It depends on Mg(2+) as a cofactor. Mn(2+) serves as cofactor.

The enzyme catalyses 2-C-methyl-D-erythritol 4-phosphate + NADP(+) = 1-deoxy-D-xylulose 5-phosphate + NADPH + H(+). It participates in isoprenoid biosynthesis; isopentenyl diphosphate biosynthesis via DXP pathway; isopentenyl diphosphate from 1-deoxy-D-xylulose 5-phosphate: step 1/6. Its function is as follows. Catalyzes the NADPH-dependent rearrangement and reduction of 1-deoxy-D-xylulose-5-phosphate (DXP) to 2-C-methyl-D-erythritol 4-phosphate (MEP). The polypeptide is 1-deoxy-D-xylulose 5-phosphate reductoisomerase (Desulfitobacterium hafniense (strain DSM 10664 / DCB-2)).